Here is a 171-residue protein sequence, read N- to C-terminus: Endoribonuclease YbeY (171 aa).

Zn(2+) contacts are provided by H130, H134, and H140.

The protein belongs to the endoribonuclease YbeY family. Zn(2+) serves as cofactor.

The protein localises to the cytoplasm. Its function is as follows. Single strand-specific metallo-endoribonuclease involved in late-stage 70S ribosome quality control and in maturation of the 3' terminus of the 16S rRNA. This chain is Endoribonuclease YbeY, found in Neisseria meningitidis serogroup A / serotype 4A (strain DSM 15465 / Z2491).